The sequence spans 81 residues: Cytochrome c oxidase subunit 7B2, mitochondrial (81 aa).

A mitochondrion-targeting transit peptide spans 1–25; it reads MMFPLARNALSSLKIQSILQSMARH. At 26-33 the chain is on the mitochondrial matrix side; sequence SHVKHSPD. Residues 34 to 60 form a helical membrane-spanning segment; sequence FHDKYGNAVLASGTAFCVATWVFTATQ. Residues 61–81 are Mitochondrial intermembrane-facing; sequence IGIEWNLSPVGRVTPKEWKHQ.

The protein belongs to the cytochrome c oxidase VIIb family. In terms of assembly, component of the cytochrome c oxidase (complex IV, CIV), a multisubunit enzyme composed of 14 subunits. The complex is composed of a catalytic core of 3 subunits MT-CO1, MT-CO2 and MT-CO3, encoded in the mitochondrial DNA, and 11 supernumerary subunits COX4I, COX5A, COX5B, COX6A, COX6B, COX6C, COX7A, COX7B, COX7C, COX8 and NDUFA4, which are encoded in the nuclear genome. The complex exists as a monomer or a dimer and forms supercomplexes (SCs) in the inner mitochondrial membrane with NADH-ubiquinone oxidoreductase (complex I, CI) and ubiquinol-cytochrome c oxidoreductase (cytochrome b-c1 complex, complex III, CIII), resulting in different assemblies (supercomplex SCI(1)III(2)IV(1) and megacomplex MCI(2)III(2)IV(2)).

The protein resides in the mitochondrion inner membrane. It participates in energy metabolism; oxidative phosphorylation. In terms of biological role, component of the cytochrome c oxidase, the last enzyme in the mitochondrial electron transport chain which drives oxidative phosphorylation. The respiratory chain contains 3 multisubunit complexes succinate dehydrogenase (complex II, CII), ubiquinol-cytochrome c oxidoreductase (cytochrome b-c1 complex, complex III, CIII) and cytochrome c oxidase (complex IV, CIV), that cooperate to transfer electrons derived from NADH and succinate to molecular oxygen, creating an electrochemical gradient over the inner membrane that drives transmembrane transport and the ATP synthase. Cytochrome c oxidase is the component of the respiratory chain that catalyzes the reduction of oxygen to water. Electrons originating from reduced cytochrome c in the intermembrane space (IMS) are transferred via the dinuclear copper A center (CU(A)) of subunit 2 and heme A of subunit 1 to the active site in subunit 1, a binuclear center (BNC) formed by heme A3 and copper B (CU(B)). The BNC reduces molecular oxygen to 2 water molecules using 4 electrons from cytochrome c in the IMS and 4 protons from the mitochondrial matrix. This chain is Cytochrome c oxidase subunit 7B2, mitochondrial (COX7B2), found in Homo sapiens (Human).